Here is a 1368-residue protein sequence, read N- to C-terminus: DNA-directed RNA polymerase subunit beta (1368 aa).

Belongs to the RNA polymerase beta chain family. The RNAP catalytic core consists of 2 alpha, 1 beta, 1 beta' and 1 omega subunit. When a sigma factor is associated with the core the holoenzyme is formed, which can initiate transcription.

It carries out the reaction RNA(n) + a ribonucleoside 5'-triphosphate = RNA(n+1) + diphosphate. Functionally, DNA-dependent RNA polymerase catalyzes the transcription of DNA into RNA using the four ribonucleoside triphosphates as substrates. The protein is DNA-directed RNA polymerase subunit beta of Paraburkholderia phymatum (strain DSM 17167 / CIP 108236 / LMG 21445 / STM815) (Burkholderia phymatum).